Reading from the N-terminus, the 142-residue chain is Large ribosomal subunit protein uL11 (142 aa).

Belongs to the universal ribosomal protein uL11 family. In terms of assembly, part of the ribosomal stalk of the 50S ribosomal subunit. Interacts with L10 and the large rRNA to form the base of the stalk. L10 forms an elongated spine to which L12 dimers bind in a sequential fashion forming a multimeric L10(L12)X complex. One or more lysine residues are methylated.

Its function is as follows. Forms part of the ribosomal stalk which helps the ribosome interact with GTP-bound translation factors. The protein is Large ribosomal subunit protein uL11 of Vibrio cholerae serotype O1 (strain ATCC 39541 / Classical Ogawa 395 / O395).